Consider the following 75-residue polypeptide: Dermaseptin-SP4 (75 aa).

Positions 1–22 (MAFLKKSLFLVLFLGLVSLSMC) are cleaved as a signal peptide. The propeptide occupies 23–45 (EEEKRENEVEEEQEDDEQSELRR). Proline amide is present on P72. A propeptide spanning residues 74–75 (EQ) is cleaved from the precursor.

It belongs to the frog skin active peptide (FSAP) family. Dermaseptin subfamily. Expressed by the skin glands.

The protein localises to the secreted. The protein resides in the target cell membrane. Antimicrobial peptide with activity against Gram-positive and Gram-negative bacteria and fungi. Has been tested against E.coli (MIC=47.25-128 uM), S.aureus (MIC=189-512 uM), K.pneumoniae (MIC=189 uM) and C.albicans (MIC&gt;189 uM). Probably acts by disturbing membrane functions with its alpha-helical amphipathic structure. May penetrate bacterial membranes, but stay at the mammalian membrane surface. Shows a weak hemolytic activity. This chain is Dermaseptin-SP4, found in Agalychnis spurrelli (Gliding leaf frog).